We begin with the raw amino-acid sequence, 348 residues long: Ion-translocating oxidoreductase complex subunit D (348 aa).

Transmembrane regions (helical) follow at residues 20–39 (LMKW…TYFF), 72–91 (ALRD…AIPP), and 120–140 (PFNP…VQMT). Residue Thr-187 is modified to FMN phosphoryl threonine. A run of 5 helical transmembrane segments spans residues 214–234 (LAGV…LVLI), 241–261 (WHIP…FLMF), 266–286 (TASP…FFIA), 300–320 (LVFG…GGFP), and 321–341 (DGVA…DYYT).

This sequence belongs to the NqrB/RnfD family. In terms of assembly, the complex is composed of six subunits: RnfA, RnfB, RnfC, RnfD, RnfE and RnfG. Requires FMN as cofactor.

The protein resides in the cell inner membrane. In terms of biological role, part of a membrane-bound complex that couples electron transfer with translocation of ions across the membrane. The polypeptide is Ion-translocating oxidoreductase complex subunit D (Vibrio atlanticus (strain LGP32) (Vibrio splendidus (strain Mel32))).